A 297-amino-acid polypeptide reads, in one-letter code: E3 ubiquitin-protein ligase TRIM52 (297 aa).

An RING-type; degenerate zinc finger spans residues cysteine 20 to glutamate 62. The segment at valine 72–proline 167 is important for rapid proteolytic degradation by the proteasome. Residues asparagine 222–leucine 263 form a B box-type zinc finger. Zn(2+) contacts are provided by cysteine 227, histidine 230, cysteine 249, and histidine 255.

The protein belongs to the TRIM/RBCC family. As to quaternary structure, (Microbial infection) Interacts with Japanese encephalitis virus non-structural protein 2 (NS2A); mediates the ubiquitination of NS2A, targeting it for proteasome-mediated degradation. In terms of processing, autoubiquitinated. Polyubiquitinated. Undergoes extremely rapid proteolytic degradation by the proteasome.

Its subcellular location is the cytoplasm. It localises to the cytosol. The protein localises to the nucleus. The catalysed reaction is S-ubiquitinyl-[E2 ubiquitin-conjugating enzyme]-L-cysteine + [acceptor protein]-L-lysine = [E2 ubiquitin-conjugating enzyme]-L-cysteine + N(6)-ubiquitinyl-[acceptor protein]-L-lysine.. Its pathway is protein modification; protein ubiquitination. Its function is as follows. E3 ubiquitin-protein ligase. Positively regulates the NF-kappa-B signaling pathway. Functionally, (Microbial infection) Exhibits antiviral activity against Japanese encephalitis virus (JEV). Ubiquitinates the viral non-structural protein 2 (NS2A) and targets it for proteasome-mediated degradation. The protein is E3 ubiquitin-protein ligase TRIM52 (TRIM52) of Homo sapiens (Human).